The primary structure comprises 205 residues: Penta-EF hand domain-containing protein 2 (205 aa).

EF-hand domains lie at 45–75 (EMQSWFMRVDANRSGTISSGELQYLNIGGTP), 76–111 (LGIETATKLIKVFDHNKNGQIDFYEYAALHQFINNL), and 119–141 (DRNFSGTIDANEIYNALITSGFQ). Ca(2+) contacts are provided by Asp54, Asn56, Ser58, Thr60, Glu65, Asp89, Asn91, Asn93, Gln95, and Glu100.

Belongs to the Peflin/Sorcin family. In contrast to pefA, does not form homodimers in presence of Ca(2+). May form heterodimers with pefA.

The protein localises to the cytoplasm. Its subcellular location is the membrane. This Dictyostelium discoideum (Social amoeba) protein is Penta-EF hand domain-containing protein 2 (pefB).